We begin with the raw amino-acid sequence, 381 residues long: Succinyl-diaminopimelate desuccinylase (381 aa).

Residue histidine 68 coordinates Zn(2+). Residue aspartate 70 is part of the active site. Aspartate 101 provides a ligand contact to Zn(2+). Glutamate 135 functions as the Proton acceptor in the catalytic mechanism. Zn(2+)-binding residues include glutamate 136, glutamate 164, and histidine 350.

The protein belongs to the peptidase M20A family. DapE subfamily. In terms of assembly, homodimer. It depends on Zn(2+) as a cofactor. Co(2+) is required as a cofactor.

It catalyses the reaction N-succinyl-(2S,6S)-2,6-diaminopimelate + H2O = (2S,6S)-2,6-diaminopimelate + succinate. It functions in the pathway amino-acid biosynthesis; L-lysine biosynthesis via DAP pathway; LL-2,6-diaminopimelate from (S)-tetrahydrodipicolinate (succinylase route): step 3/3. In terms of biological role, catalyzes the hydrolysis of N-succinyl-L,L-diaminopimelic acid (SDAP), forming succinate and LL-2,6-diaminopimelate (DAP), an intermediate involved in the bacterial biosynthesis of lysine and meso-diaminopimelic acid, an essential component of bacterial cell walls. This Neisseria gonorrhoeae (strain NCCP11945) protein is Succinyl-diaminopimelate desuccinylase.